A 58-amino-acid polypeptide reads, in one-letter code: Galectin-1 (58 aa).

Residues 2–58 (GITXTSLHVAPGARLAVKGDIPAGAKSWVINLGKGENDIMLHFNARFDAHGDIRTIV) enclose the Galectin domain. Residues 43–47 (HFNAR) and His-51 each bind a beta-D-galactoside.

Monomer. Detected in most tissues, most abundantly in skin.

The protein localises to the secreted. It localises to the extracellular space. The protein resides in the extracellular matrix. Its function is as follows. May regulate cell apoptosis and cell differentiation. Binds beta-galactoside and a wide array of complex carbohydrates. This is Galectin-1 from Podarcis hispanicus (Iberian wall lizard).